The sequence spans 54 residues: Ovomucoid (54 aa).

Residues 4 to 54 form the Kazal-like domain; it reads VDCSDYPKPVCSLEDMPLCGSDSKTYSNKCNFCNAVVDSNGTLTLSHFGKC. Intrachain disulfides connect C6/C36, C14/C33, and C22/C54. An N-linked (GlcNAc...) asparagine glycan is attached at N43.

The protein resides in the secreted. The polypeptide is Ovomucoid (Vultur gryphus (Andean condor)).